Here is a 475-residue protein sequence, read N- to C-terminus: Ribulose bisphosphate carboxylase large chain (475 aa).

A propeptide spanning residues 1–2 (MS) is cleaved from the precursor. An N-acetylproline modification is found at P3. K14 carries the N6,N6,N6-trimethyllysine modification. Residues N123 and T173 each coordinate substrate. Residue K175 is the Proton acceptor of the active site. Position 177 (K177) interacts with substrate. Mg(2+)-binding residues include K201, D203, and E204. K201 carries the post-translational modification N6-carboxylysine. Catalysis depends on H294, which acts as the Proton acceptor. Substrate-binding residues include R295, H327, and S379.

Belongs to the RuBisCO large chain family. Type I subfamily. Heterohexadecamer of 8 large chains and 8 small chains; disulfide-linked. The disulfide link is formed within the large subunit homodimers. It depends on Mg(2+) as a cofactor. Post-translationally, the disulfide bond which can form in the large chain dimeric partners within the hexadecamer appears to be associated with oxidative stress and protein turnover.

It localises to the plastid. The protein localises to the chloroplast. It catalyses the reaction 2 (2R)-3-phosphoglycerate + 2 H(+) = D-ribulose 1,5-bisphosphate + CO2 + H2O. The catalysed reaction is D-ribulose 1,5-bisphosphate + O2 = 2-phosphoglycolate + (2R)-3-phosphoglycerate + 2 H(+). Its function is as follows. RuBisCO catalyzes two reactions: the carboxylation of D-ribulose 1,5-bisphosphate, the primary event in carbon dioxide fixation, as well as the oxidative fragmentation of the pentose substrate in the photorespiration process. Both reactions occur simultaneously and in competition at the same active site. The sequence is that of Ribulose bisphosphate carboxylase large chain from Anthoceros angustus (Hornwort).